Consider the following 388-residue polypeptide: GTPase Obg (388 aa).

One can recognise an Obg domain in the interval 1–159 (MKFVDEATIR…RSLRLELMLL (159 aa)). Residues 160–333 (ADVGLLGMPN…LALKLLDFID (174 aa)) enclose the OBG-type G domain. Residues 166-173 (GMPNAGKS), 191-195 (FTTLV), 213-216 (DIPG), 283-286 (NKAD), and 314-316 (SAY) each bind GTP. Mg(2+) contacts are provided by serine 173 and threonine 193. Residues 356-377 (QNANESVNEDYDDDLDDDDYDD) form a disordered region. A compositionally biased stretch (acidic residues) spans 362–377 (VNEDYDDDLDDDDYDD).

Belongs to the TRAFAC class OBG-HflX-like GTPase superfamily. OBG GTPase family. Monomer. The cofactor is Mg(2+).

It localises to the cytoplasm. Functionally, an essential GTPase which binds GTP, GDP and possibly (p)ppGpp with moderate affinity, with high nucleotide exchange rates and a fairly low GTP hydrolysis rate. Plays a role in control of the cell cycle, stress response, ribosome biogenesis and in those bacteria that undergo differentiation, in morphogenesis control. This is GTPase Obg from Shewanella piezotolerans (strain WP3 / JCM 13877).